The chain runs to 312 residues: Protoheme IX farnesyltransferase 1 (312 aa).

The next 9 membrane-spanning stretches (helical) occupy residues 21–41 (GVLA…LLVT), 53–73 (IPSP…AGSA), 105–125 (SALV…ALGA), 127–147 (LLAA…YTLV), 156–176 (IVWG…AVTG), 182–202 (ALVM…SLAM), 225–245 (VSAR…LLVP), 246–266 (ATSW…LIVA), and 292–312 (LALL…SFVA).

Belongs to the UbiA prenyltransferase family. Protoheme IX farnesyltransferase subfamily.

It localises to the cell membrane. It catalyses the reaction heme b + (2E,6E)-farnesyl diphosphate + H2O = Fe(II)-heme o + diphosphate. Its pathway is porphyrin-containing compound metabolism; heme O biosynthesis; heme O from protoheme: step 1/1. Functionally, converts heme B (protoheme IX) to heme O by substitution of the vinyl group on carbon 2 of heme B porphyrin ring with a hydroxyethyl farnesyl side group. This Saccharopolyspora erythraea (strain ATCC 11635 / DSM 40517 / JCM 4748 / NBRC 13426 / NCIMB 8594 / NRRL 2338) protein is Protoheme IX farnesyltransferase 1.